A 214-amino-acid polypeptide reads, in one-letter code: Adenylate kinase (214 aa).

10-15 (GAGKGT) is a binding site for ATP. The NMP stretch occupies residues 30 to 59 (STGDMFRAAIKAGTELGKQAKALMDEGKLV). AMP contacts are provided by residues threonine 31, arginine 36, 57–59 (KLV), 85–88 (GFPR), and glutamine 92. The interval 122-159 (GRRVHQTSGRSYHIVYNPPKVEGKDDVTGEDLIIRADD) is LID. Residues arginine 123 and 132 to 133 (SY) contribute to the ATP site. AMP is bound by residues arginine 156 and arginine 167. ATP is bound at residue glutamine 200.

Belongs to the adenylate kinase family. In terms of assembly, monomer.

The protein localises to the cytoplasm. The enzyme catalyses AMP + ATP = 2 ADP. Its pathway is purine metabolism; AMP biosynthesis via salvage pathway; AMP from ADP: step 1/1. Functionally, catalyzes the reversible transfer of the terminal phosphate group between ATP and AMP. Plays an important role in cellular energy homeostasis and in adenine nucleotide metabolism. The sequence is that of Adenylate kinase from Haemophilus influenzae (strain PittEE).